A 356-amino-acid polypeptide reads, in one-letter code: Protein-glutamate methylesterase/protein-glutamine glutaminase 2 (356 aa).

A Response regulatory domain is found at 4–121 (RALVVDDSAL…SQSMPEMAEE (118 aa)). D55 carries the post-translational modification 4-aspartylphosphate. The CheB-type methylesterase domain maps to 161–356 (KAAPRNILAI…MAEEIIRIIG (196 aa)). Active-site residues include S173, H200, and D300.

Belongs to the CheB family. Post-translationally, phosphorylated by CheA. Phosphorylation of the N-terminal regulatory domain activates the methylesterase activity.

It localises to the cytoplasm. It carries out the reaction [protein]-L-glutamate 5-O-methyl ester + H2O = L-glutamyl-[protein] + methanol + H(+). The enzyme catalyses L-glutaminyl-[protein] + H2O = L-glutamyl-[protein] + NH4(+). Its function is as follows. Involved in chemotaxis. Part of a chemotaxis signal transduction system that modulates chemotaxis in response to various stimuli. Catalyzes the demethylation of specific methylglutamate residues introduced into the chemoreceptors (methyl-accepting chemotaxis proteins or MCP) by CheR. Also mediates the irreversible deamidation of specific glutamine residues to glutamic acid. This is Protein-glutamate methylesterase/protein-glutamine glutaminase 2 from Methanosarcina acetivorans (strain ATCC 35395 / DSM 2834 / JCM 12185 / C2A).